Reading from the N-terminus, the 474-residue chain is Glycogen synthase (474 aa).

K15 is a binding site for ADP-alpha-D-glucose.

This sequence belongs to the glycosyltransferase 1 family. Bacterial/plant glycogen synthase subfamily.

It catalyses the reaction [(1-&gt;4)-alpha-D-glucosyl](n) + ADP-alpha-D-glucose = [(1-&gt;4)-alpha-D-glucosyl](n+1) + ADP + H(+). It participates in glycan biosynthesis; glycogen biosynthesis. Its function is as follows. Synthesizes alpha-1,4-glucan chains using ADP-glucose. The protein is Glycogen synthase of Chlamydia trachomatis serovar D (strain ATCC VR-885 / DSM 19411 / UW-3/Cx).